The chain runs to 35 residues: Anti-H(O) lectin 3 (35 aa).

The protein belongs to the leguminous lectin family. In terms of assembly, homodimer. In terms of processing, highly glycosylated.

Functionally, binds lactose or galactose. This chain is Anti-H(O) lectin 3, found in Ulex europaeus (Furze).